A 403-amino-acid chain; its full sequence is Dihydroorotase (403 aa).

The Zn(2+) site is built by H48 and H50. Substrate contacts are provided by residues 50–52 (HLR) and N82. Zn(2+) is bound by residues E140, H172, H211, and D277. D277 is an active-site residue. Residue H281 coordinates substrate.

The protein belongs to the metallo-dependent hydrolases superfamily. DHOase family. Class I DHOase subfamily. It depends on Zn(2+) as a cofactor.

It catalyses the reaction (S)-dihydroorotate + H2O = N-carbamoyl-L-aspartate + H(+). It participates in pyrimidine metabolism; UMP biosynthesis via de novo pathway; (S)-dihydroorotate from bicarbonate: step 3/3. Catalyzes the reversible cyclization of carbamoyl aspartate to dihydroorotate. This is Dihydroorotase from Archaeoglobus fulgidus (strain ATCC 49558 / DSM 4304 / JCM 9628 / NBRC 100126 / VC-16).